Here is a 279-residue protein sequence, read N- to C-terminus: Movement protein (279 aa).

The protein belongs to the cucumovirus movement protein family.

Its subcellular location is the host cell junction. It is found in the host plasmodesma. Functionally, transports viral genome to neighboring plant cells directly through plasmosdesmata, without any budding. The movement protein allows efficient cell to cell propagation, by bypassing the host cell wall barrier. Acts by forming a tubular structure at the host plasmodesmata, enlarging it enough to allow free passage of virion capsids. In Cucumber mosaic virus (strain Kin) (CMV), this protein is Movement protein.